The chain runs to 303 residues: UDP-3-O-acyl-N-acetylglucosamine deacetylase (303 aa).

Zn(2+) is bound by residues His78, His237, and Asp241. The active-site Proton donor is the His264.

It belongs to the LpxC family. Zn(2+) serves as cofactor.

It carries out the reaction a UDP-3-O-[(3R)-3-hydroxyacyl]-N-acetyl-alpha-D-glucosamine + H2O = a UDP-3-O-[(3R)-3-hydroxyacyl]-alpha-D-glucosamine + acetate. The protein operates within glycolipid biosynthesis; lipid IV(A) biosynthesis; lipid IV(A) from (3R)-3-hydroxytetradecanoyl-[acyl-carrier-protein] and UDP-N-acetyl-alpha-D-glucosamine: step 2/6. In terms of biological role, catalyzes the hydrolysis of UDP-3-O-myristoyl-N-acetylglucosamine to form UDP-3-O-myristoylglucosamine and acetate, the committed step in lipid A biosynthesis. This chain is UDP-3-O-acyl-N-acetylglucosamine deacetylase, found in Azotobacter vinelandii (strain DJ / ATCC BAA-1303).